A 104-amino-acid polypeptide reads, in one-letter code: Large ribosomal subunit protein bL21 (104 aa).

It belongs to the bacterial ribosomal protein bL21 family. Part of the 50S ribosomal subunit. Contacts protein L20.

Functionally, this protein binds to 23S rRNA in the presence of protein L20. This is Large ribosomal subunit protein bL21 from Thermotoga sp. (strain RQ2).